We begin with the raw amino-acid sequence, 668 residues long: tRNA 5-methylaminomethyl-2-thiouridine biosynthesis bifunctional protein MnmC (668 aa).

A tRNA (mnm(5)s(2)U34)-methyltransferase region spans residues 1 to 245 (MKHYSIQPAN…KREMLCGVME (245 aa)). The tract at residues 270 to 668 (IGGGIASALL…LLKGKAVKAG (399 aa)) is FAD-dependent cmnm(5)s(2)U34 oxidoreductase.

In the N-terminal section; belongs to the methyltransferase superfamily. tRNA (mnm(5)s(2)U34)-methyltransferase family. This sequence in the C-terminal section; belongs to the DAO family. FAD is required as a cofactor.

Its subcellular location is the cytoplasm. It catalyses the reaction 5-aminomethyl-2-thiouridine(34) in tRNA + S-adenosyl-L-methionine = 5-methylaminomethyl-2-thiouridine(34) in tRNA + S-adenosyl-L-homocysteine + H(+). In terms of biological role, catalyzes the last two steps in the biosynthesis of 5-methylaminomethyl-2-thiouridine (mnm(5)s(2)U) at the wobble position (U34) in tRNA. Catalyzes the FAD-dependent demodification of cmnm(5)s(2)U34 to nm(5)s(2)U34, followed by the transfer of a methyl group from S-adenosyl-L-methionine to nm(5)s(2)U34, to form mnm(5)s(2)U34. The polypeptide is tRNA 5-methylaminomethyl-2-thiouridine biosynthesis bifunctional protein MnmC (Escherichia coli O157:H7).